Here is a 129-residue protein sequence, read N- to C-terminus: Thyroid hormone receptor alpha (129 aa).

The NR LBD domain maps to 26–129; sequence AEWELIRMVT…EIMSLRAAVR (104 aa). Residue Arg91 participates in 3,3',5-triiodo-L-thyronine binding.

The protein belongs to the nuclear hormone receptor family. NR1 subfamily.

It localises to the nucleus. Its function is as follows. Nuclear hormone receptor that can act as a repressor or activator of transcription. High affinity receptor for thyroid hormones, including triiodothyronine and thyroxine. In Sparus aurata (Gilthead sea bream), this protein is Thyroid hormone receptor alpha (thra1).